Consider the following 150-residue polypeptide: Small ribosomal subunit protein uS7cz/uS7cy (150 aa).

The protein belongs to the universal ribosomal protein uS7 family. As to quaternary structure, part of the 30S ribosomal subunit.

It is found in the plastid. Its subcellular location is the chloroplast. Functionally, one of the primary rRNA binding proteins, it binds directly to 16S rRNA where it nucleates assembly of the head domain of the 30S subunit. The polypeptide is Small ribosomal subunit protein uS7cz/uS7cy (rps7-A) (Adiantum capillus-veneris (Maidenhair fern)).